An 805-amino-acid chain; its full sequence is Leucine--tRNA ligase (805 aa).

The 'HIGH' region signature appears at 40–51 (PYPSGQGLHVGH). Positions 577 to 581 (KMSKS) match the 'KMSKS' region motif. Lys-580 serves as a coordination point for ATP.

Belongs to the class-I aminoacyl-tRNA synthetase family.

Its subcellular location is the cytoplasm. It catalyses the reaction tRNA(Leu) + L-leucine + ATP = L-leucyl-tRNA(Leu) + AMP + diphosphate. This Pediococcus pentosaceus (strain ATCC 25745 / CCUG 21536 / LMG 10740 / 183-1w) protein is Leucine--tRNA ligase.